Reading from the N-terminus, the 299-residue chain is MQADLDAFLDHLRNERQVSQHTLDGYRRDLAKVHAHCEREGLDAWSALDAGRLRRLIARLHLQGHSSRSLARLLSALRGFYRYLLREGRCRHDPAAGLSPPKGERRLPRTLDADRTQQLLDGAVEDDFIARRDQAMLELFYSSGLRLSELVGLDLDRLDLAAGLVRVHGKGNKARDLPIGSKAREALRAWLSLRAQARPADGALFVGRTGRRLTPRAVQLRVRQAGVRELGQHLHPHMLRHSFASHLLESSQDLRAVQELLGHADIATTQIYTHLDFQHLAAVYDQAHPRARRRKDDTS.

A Core-binding (CB) domain is found at Met1–Leu85. The Tyr recombinase domain maps to Arg106–Asp285. Active-site residues include Arg146, Lys170, His237, Arg240, and His263. Tyr272 acts as the O-(3'-phospho-DNA)-tyrosine intermediate in catalysis.

It belongs to the 'phage' integrase family. XerC subfamily. Forms a cyclic heterotetrameric complex composed of two molecules of XerC and two molecules of XerD.

It localises to the cytoplasm. In terms of biological role, site-specific tyrosine recombinase, which acts by catalyzing the cutting and rejoining of the recombining DNA molecules. The XerC-XerD complex is essential to convert dimers of the bacterial chromosome into monomers to permit their segregation at cell division. It also contributes to the segregational stability of plasmids. This chain is Tyrosine recombinase XerC, found in Azotobacter vinelandii (strain DJ / ATCC BAA-1303).